Consider the following 301-residue polypeptide: Protoheme IX farnesyltransferase (301 aa).

The next 9 membrane-spanning stretches (helical) occupy residues 20–42, 55–75, 105–125, 126–146, 150–172, 176–198, 227–247, 249–269, and 280–300; these read FTEL…GMWL, VDVI…SGAF, ALMV…MTTW, QAGV…SLYA, LVSN…WFAV, FSMV…FYAI, MFFW…LGIV, VILA…GFKM, and FIYS…ISIF.

It belongs to the UbiA prenyltransferase family. Protoheme IX farnesyltransferase subfamily. Interacts with CtaA.

The protein resides in the cell membrane. The enzyme catalyses heme b + (2E,6E)-farnesyl diphosphate + H2O = Fe(II)-heme o + diphosphate. It functions in the pathway porphyrin-containing compound metabolism; heme O biosynthesis; heme O from protoheme: step 1/1. Functionally, converts heme B (protoheme IX) to heme O by substitution of the vinyl group on carbon 2 of heme B porphyrin ring with a hydroxyethyl farnesyl side group. This chain is Protoheme IX farnesyltransferase, found in Listeria welshimeri serovar 6b (strain ATCC 35897 / DSM 20650 / CCUG 15529 / CIP 8149 / NCTC 11857 / SLCC 5334 / V8).